The following is a 747-amino-acid chain: Ion-translocating oxidoreductase complex subunit C (747 aa).

4Fe-4S ferredoxin-type domains are found at residues 368 to 397 and 407 to 436; these read MEPV…QQLY and KARN…VQYY. 8 residues coordinate [4Fe-4S] cluster: Cys-377, Cys-380, Cys-383, Cys-387, Cys-416, Cys-419, Cys-422, and Cys-426. The disordered stretch occupies residues 538-564; the sequence is VREERARENQTQQETPTVDVPSTELDD.

This sequence belongs to the 4Fe4S bacterial-type ferredoxin family. RnfC subfamily. As to quaternary structure, the complex is composed of six subunits: RnfA, RnfB, RnfC, RnfD, RnfE and RnfG. It depends on [4Fe-4S] cluster as a cofactor.

The protein resides in the cell inner membrane. Part of a membrane-bound complex that couples electron transfer with translocation of ions across the membrane. The chain is Ion-translocating oxidoreductase complex subunit C from Pectobacterium carotovorum subsp. carotovorum (strain PC1).